Here is a 1426-residue protein sequence, read N- to C-terminus: ABC transporter G family member 31 (1426 aa).

N-linked (GlcNAc...) asparagine glycans are attached at residues N6 and N150. Residues 160–434 (LSSLRIIKPR…FESLGFRLPP (275 aa)) enclose the ABC transporter 1 domain. 193–200 (GPPGSGKS) provides a ligand contact to ATP. A glycan (N-linked (GlcNAc...) asparagine) is linked at N219. T276 is subject to Phosphothreonine. An ABC transmembrane type-2 1 domain is found at 512-725 (ENLKVCFVRE…GQRAIAVNEF (214 aa)). Transmembrane regions (helical) follow at residues 530–550 (FLYT…ATVF), 569–589 (CLFF…PLMI), 618–638 (VPYS…TVGL), 649–669 (MLLL…MASL), 675–695 (IANT…GFVI), and 760–780 (IGIA…TLAL). Residues 826–1078 (MTFHNVNYYV…VLVDYFQGIN (253 aa)) form the ABC transporter 2 domain. N856 carries N-linked (GlcNAc...) asparagine glycosylation. 871–878 (GSSGAGKT) contributes to the ATP binding site. The 215-residue stretch at 1151–1365 (SQFLLCLWKQ…TLQGVILSQL (215 aa)) folds into the ABC transmembrane type-2 2 domain. Helical transmembrane passes span 1172-1192 (LVRL…FWDI), 1202-1222 (LITV…SNAS), 1258-1278 (IPYI…TIGF), 1285-1305 (FVLY…YGMM), 1315-1335 (LAAV…GFLV), 1342-1362 (VWWI…GVIL), and 1396-1416 (IGVS…AFAL).

Belongs to the ABC transporter superfamily. ABCG family. PDR (TC 3.A.1.205) subfamily. In terms of tissue distribution, expressed in seedlings, stems, leaves, siliques and inflorescence. In seeds, confined to the endosperm. Highly expressed in the tapetum of anthers.

The protein localises to the cell membrane. It carries out the reaction abscisate(in) + ATP + H2O = abscisate(out) + ADP + phosphate + H(+). In terms of biological role, together with ABCG25, export abscisic acid (ABA) from the endosperm to deliver it to the embryo via ABCG30 and ABCG40-mediated import to suppress radicle extension and subsequent embryonic growth. Together with ABCG9, involved in pollen coat deposition of steryl glycosides required for pollen fitness. May be a general defense protein. This is ABC transporter G family member 31 from Arabidopsis thaliana (Mouse-ear cress).